The primary structure comprises 126 residues: Large ribosomal subunit protein bL12 (126 aa).

Belongs to the bacterial ribosomal protein bL12 family. In terms of assembly, homodimer. Part of the ribosomal stalk of the 50S ribosomal subunit. Forms a multimeric L10(L12)X complex, where L10 forms an elongated spine to which 2 to 4 L12 dimers bind in a sequential fashion. Binds GTP-bound translation factors.

Its function is as follows. Forms part of the ribosomal stalk which helps the ribosome interact with GTP-bound translation factors. Is thus essential for accurate translation. The chain is Large ribosomal subunit protein bL12 from Koribacter versatilis (strain Ellin345).